The sequence spans 711 residues: Hydroperoxide isomerase ALOXE3 (711 aa).

Residues 2-119 enclose the PLAT domain; it reads AVYRLCVTTG…TVELRPGTAR (118 aa). Positions 120–711 constitute a Lipoxygenase domain; that stretch reads TICQDSLPLL…PPLIENSVSI (592 aa). Histidine 408, histidine 413, histidine 588, asparagine 592, and isoleucine 711 together coordinate Fe cation.

Belongs to the lipoxygenase family. Requires Fe cation as cofactor. Skin specific.

It is found in the cytoplasm. The catalysed reaction is a hydroperoxyeicosatetraenoate = a hydroxy-epoxy-eicosatetraenoate. The enzyme catalyses (8S)-hydroperoxy-(5Z,9E,11Z,14Z)-eicosatetraenoate = (10R)-hydroxy-(8S,9S)-epoxy-(5Z,11Z,14Z)-eicosatrienoate. It catalyses the reaction (12R)-hydroperoxy-(5Z,8Z,10E,14Z)-eicosatetraenoate = (8R)-hydroxy-(11R,12R)-epoxy-(5Z,9E,14Z)-eicosatrienoate. It carries out the reaction (12S)-hydroperoxy-(5Z,8Z,10E,14Z)-eicosatetraenoate = (8R)-hydroxy-(11S,12S)-epoxy-(5Z,9E,14Z)-eicosatrienoate. The catalysed reaction is (12S)-hydroperoxy-(5Z,8Z,10E,14Z)-eicosatetraenoate = (10R)-hydroxy-(11S,12S)-epoxy-(5Z,8Z,14Z)-eicosatrienoate. The enzyme catalyses (15S)-hydroperoxy-(5Z,8Z,11Z,13E)-eicosatetraenoate = (13R)-hydroxy-(14S,15S)-epoxy-(5Z,8Z,11Z)-eicosatrienoate. It catalyses the reaction (13S)-hydroperoxy-(9Z,11E)-octadecadienoate = 11-hydroxy-(12S,13S)-epoxy-(9Z)-octadecenoate. It carries out the reaction (5S)-hydroperoxy-(6E,8Z,11Z,14Z)-eicosatetraenoate = 7R-hydroxy-5S,6S-epoxy-(8Z,11Z,14Z)-eicosatrienoate. The catalysed reaction is N-[omega-(9R)-hydroperoxy-(10E,12Z)-octadecadienoyloxy]acyl-beta-D-glucosyl-(1&lt;-&gt;1)-octadecasphing-4E-enine = a N-[omega-(9R,10R)-epoxy-(13R)-hydroxy-(11E)-octadecenoyloxy]acyl-beta-D-glucosyl-(1&lt;-&gt;1)-sphing-4E-enine. The enzyme catalyses a N-[omega-(9R)-hydroperoxy-(10E,12Z)-octadecadienoyloxy]-acylsphin-4E-enine = a N-[omega-(9R,10R)-epoxy-(13R)-hydroxy-(11E)-octadecenoyloxy]-acylsphing-4E-enine. It catalyses the reaction a hydroperoxyeicosatetraenoate = an oxoeicosatetraenoate + H2O. It carries out the reaction (8R)-hydroperoxy-(5Z,9E,11Z,14Z)-eicosatetraenoate = 8-oxo-(5Z,9E,11Z,14Z)-eicosatetraenoate + H2O. The catalysed reaction is (8S)-hydroperoxy-(5Z,9E,11Z,14Z)-eicosatetraenoate = 8-oxo-(5Z,9E,11Z,14Z)-eicosatetraenoate + H2O. The enzyme catalyses (12R)-hydroperoxy-(5Z,8Z,10E,14Z)-eicosatetraenoate = 12-oxo-(5Z,8Z,10E,14Z)-eicosatetraenoate + H2O. It catalyses the reaction (12S)-hydroperoxy-(5Z,8Z,10E,14Z)-eicosatetraenoate = 12-oxo-(5Z,8Z,10E,14Z)-eicosatetraenoate + H2O. It carries out the reaction (15S)-hydroperoxy-(5Z,8Z,11Z,13E)-eicosatetraenoate = 15-oxo-(5Z,8Z,11Z,13E)-eicosatetraenoate + H2O. The catalysed reaction is (13S)-hydroperoxy-(9Z,11E)-octadecadienoate = 13-oxo-(9Z,11E)-octadecadienoate + H2O. It participates in lipid metabolism; hydroperoxy eicosatetraenoic acid biosynthesis. The protein operates within lipid metabolism; sphingolipid metabolism. Functionally, non-heme iron-containing lipoxygenase which is atypical in that it displays a prominent hydroperoxide isomerase activity and a reduced lipoxygenases activity. The hydroperoxide isomerase activity catalyzes the isomerization of hydroperoxides, derived from arachidonic and linoleic acid by ALOX12B, into hepoxilin-type epoxyalcohols and ketones. In presence of oxygen, oxygenates polyunsaturated fatty acids, including arachidonic acid, to produce fatty acid hydroperoxides. In the skin, acts downstream of ALOX12B on the linoleate moiety of esterified omega-hydroxyacyl-sphingosine (EOS) ceramides to produce an epoxy-ketone derivative, a crucial step in the conjugation of omega-hydroxyceramide to membrane proteins. Therefore plays a crucial role in the synthesis of corneocytes lipid envelope and the establishment of the skin barrier to water loss. In parallel, it may have a signaling function in barrier formation through the production of hepoxilins metabolites. Also plays a role in adipocyte differentiation through hepoxilin A3 and hepoxilin B3 production which in turn activate PPARG. Through the production of hepoxilins in the spinal cord, it may regulate inflammatory tactile allodynia. The sequence is that of Hydroperoxide isomerase ALOXE3 from Mus musculus (Mouse).